Here is a 358-residue protein sequence, read N- to C-terminus: Probable arabinan endo-1,5-alpha-L-arabinosidase B (358 aa).

An N-terminal signal peptide occupies residues M1–C16. D39 (proton acceptor) is an active-site residue. N194 carries an N-linked (GlcNAc...) asparagine glycan. Residues H202 to S227 are disordered. The active-site Proton donor is E233.

It belongs to the glycosyl hydrolase 43 family.

The protein resides in the secreted. The catalysed reaction is Endohydrolysis of (1-&gt;5)-alpha-arabinofuranosidic linkages in (1-&gt;5)-arabinans.. It functions in the pathway glycan metabolism; L-arabinan degradation. Endo-1,5-alpha-L-arabinanase involved in degradation of pectin. Its preferred substrate is linear 1,5-alpha-L-arabinan. In Aspergillus flavus (strain ATCC 200026 / FGSC A1120 / IAM 13836 / NRRL 3357 / JCM 12722 / SRRC 167), this protein is Probable arabinan endo-1,5-alpha-L-arabinosidase B (abnB).